The primary structure comprises 136 residues: Large ribosomal subunit protein uL16 (136 aa).

Belongs to the universal ribosomal protein uL16 family. In terms of assembly, part of the 50S ribosomal subunit.

Binds 23S rRNA and is also seen to make contacts with the A and possibly P site tRNAs. This Alteromonas mediterranea (strain DSM 17117 / CIP 110805 / LMG 28347 / Deep ecotype) protein is Large ribosomal subunit protein uL16.